The primary structure comprises 103 residues: Small ribosomal subunit protein uS10 (103 aa).

The protein belongs to the universal ribosomal protein uS10 family. Part of the 30S ribosomal subunit.

Its function is as follows. Involved in the binding of tRNA to the ribosomes. The protein is Small ribosomal subunit protein uS10 of Bordetella parapertussis (strain 12822 / ATCC BAA-587 / NCTC 13253).